The primary structure comprises 97 residues: UPF0473 protein Exig_2070 (97 aa).

It belongs to the UPF0473 family.

The sequence is that of UPF0473 protein Exig_2070 from Exiguobacterium sibiricum (strain DSM 17290 / CCUG 55495 / CIP 109462 / JCM 13490 / 255-15).